Consider the following 148-residue polypeptide: UPF0134 protein MPN_204 (148 aa).

The protein belongs to the UPF0134 family.

In Mycoplasma pneumoniae (strain ATCC 29342 / M129 / Subtype 1) (Mycoplasmoides pneumoniae), this protein is UPF0134 protein MPN_204.